A 429-amino-acid chain; its full sequence is UDP-N-acetylglucosamine 1-carboxyvinyltransferase (429 aa).

Position 22–23 (22–23) interacts with phosphoenolpyruvate; the sequence is KN. Arg102 lines the UDP-N-acetyl-alpha-D-glucosamine pocket. The active-site Proton donor is the Cys126. Cys126 carries the post-translational modification 2-(S-cysteinyl)pyruvic acid O-phosphothioketal. UDP-N-acetyl-alpha-D-glucosamine is bound by residues 131–135, Asp316, and Ile338; that span reads RPVDL.

This sequence belongs to the EPSP synthase family. MurA subfamily.

It localises to the cytoplasm. The enzyme catalyses phosphoenolpyruvate + UDP-N-acetyl-alpha-D-glucosamine = UDP-N-acetyl-3-O-(1-carboxyvinyl)-alpha-D-glucosamine + phosphate. Its pathway is cell wall biogenesis; peptidoglycan biosynthesis. Cell wall formation. Adds enolpyruvyl to UDP-N-acetylglucosamine. This Rhodopseudomonas palustris (strain BisA53) protein is UDP-N-acetylglucosamine 1-carboxyvinyltransferase.